The chain runs to 190 residues: MPNAECRHNAGFWSAAYAEMPISKFTAYAENAVLPKRKMDGISAYADMPKKIFGGICRYAVMPKNSECRTGMIQTQPGTKIVFNAPYDDKHTYHIKVINSSARRIGYGIKTTNMKRLGVDPPCGVLDPKEAVLLAVSCDAFAFGQEDTNNDRITVEWTNTPDGAAKQFRREWFQGDGMVRRKNLPIEYNP.

The MSP domain occupies M72 to N189.

Sperm.

Its subcellular location is the cell projection. The protein resides in the pseudopodium. The protein localises to the cytoplasm. It localises to the cytoskeleton. In terms of biological role, central component in molecular interactions underlying sperm crawling. Forms an extensive filament system that extends from sperm villipoda, along the leading edge of the pseudopod. This Caenorhabditis elegans protein is Major sperm protein 32 (msp-32).